Consider the following 512-residue polypeptide: Pantetheinase (512 aa).

Residues Met1–Ser23 form the signal peptide. The CN hydrolase domain occupies Tyr32–Ser308. The Proton acceptor role is filled by Glu81. 2 N-linked (GlcNAc...) asparagine glycosylation sites follow: Asn132 and Asn148. Lys180 serves as the catalytic Proton donor. Residue Cys213 is the Nucleophile of the active site. N-linked (GlcNAc...) asparagine glycans are attached at residues Asn316 and Asn354. Residue Asn488 is the site of GPI-anchor amidated asparagine attachment. Positions Ala489 to Cys512 are cleaved as a propeptide — removed in mature form.

The protein belongs to the carbon-nitrogen hydrolase superfamily. BTD/VNN family. In terms of assembly, monomer. N-glycosylated. Detected in kidney (at protein level). Ubiquitous.

It localises to the cell membrane. The enzyme catalyses (R)-pantetheine + H2O = cysteamine + (R)-pantothenate. Its function is as follows. Amidohydrolase that hydrolyzes specifically one of the carboamide linkages in D-pantetheine thus recycling pantothenic acid (vitamin B5) and releasing cysteamine. This is Pantetheinase (Vnn1) from Mus musculus (Mouse).